A 155-amino-acid chain; its full sequence is uncharacterized protein (155 aa).

2 disordered regions span residues 1 to 22 and 108 to 155; these read MSSQ…TFTF and PFNK…DTQA. S2 bears the N-acetylserine mark. Residues S136, S144, and S146 each carry the phosphoserine modification. The span at 136-155 shows a compositional bias: acidic residues; sequence SDEDLDAESDSEGEDEDTQA.

This is an uncharacterized protein from Rattus norvegicus (Rat).